The primary structure comprises 305 residues: MAAGLARLLLLLGLSAGGPAPAGAAKMKVVEEPNAFGVNNPFLPQASRLQAKRDPSPVSGPVHLFRLSGKCFSLVESTYKYEFCPFHNVTQHEQTFRWNAYSGILGIWHEWEIANNTFTGMWMRDGDACRSRSRQSKVELACGKSNRLAHVSEPSTCVYALTFETPLVCHPHALLVYPTLPEALQRQWDQVEQDLADELITPQGHEKLLRTLFEDAGYLKTPEENEPTQLEGGPDSLGFETLENCRKAHKELSKEIKRLKGLLTQHGIPYTRPTETSNLEHLGHETPRAKSPEQLRGDPGLRGSL.

Residues 1 to 24 form the signal peptide; it reads MAAGLARLLLLLGLSAGGPAPAGA. Positions 69 to 171 constitute an MRH domain; it reads GKCFSLVEST…TFETPLVCHP (103 aa). The cysteines at positions 71 and 84 are disulfide-linked. N-linked (GlcNAc...) asparagine glycosylation is found at Asn-88 and Asn-115. Cystine bridges form between Cys-129–Cys-157 and Cys-142–Cys-169. A DMAP1-binding domain is found at 176–279; that stretch reads VYPTLPEALQ…YTRPTETSNL (104 aa). The disordered stretch occupies residues 267–305; it reads GIPYTRPTETSNLEHLGHETPRAKSPEQLRGDPGLRGSL. Over residues 281–296 the composition is skewed to basic and acidic residues; sequence HLGHETPRAKSPEQLR.

As to quaternary structure, homodimer; disulfide-linked. Hexamer of two alpha (GNPTAB), two beta (GNPTAB) and two gamma (GNPTG) subunits; disulfide-linked. The alpha and/or the beta subunits of the enzyme constitute the catalytic subunits. Post-translationally, cys-245 mediates the formation of the interchain disulfide bond for formation of the homodimer. Cys-142, Cys-157 and Cys-169 are involved in intramolecular disulfide bonds formation. Widely expressed.

The protein localises to the secreted. It localises to the golgi apparatus. Functionally, non-catalytic subunit of the N-acetylglucosamine-1-phosphotransferase complex, an enzyme that catalyzes the formation of mannose 6-phosphate (M6P) markers on high mannose type oligosaccharides in the Golgi apparatus. Binds and presents the high mannose glycans of the acceptor to the catalytic alpha and beta subunits (GNPTAB). Enhances the rate of N-acetylglucosamine-1-phosphate transfer to the oligosaccharides of acid hydrolase acceptors. The sequence is that of N-acetylglucosamine-1-phosphotransferase subunit gamma (GNPTG) from Homo sapiens (Human).